A 135-amino-acid polypeptide reads, in one-letter code: Large ribosomal subunit protein eL32 (135 aa).

It belongs to the eukaryotic ribosomal protein eL32 family.

The protein is Large ribosomal subunit protein eL32 (rpl32e) of Methanococcus vannielii.